The sequence spans 605 residues: Conglutin beta 7 (605 aa).

Positions 1–30 are cleaved as a signal peptide; the sequence is MARMRVRFPTLVLLLGILFLMAVSIGIAYG. Residues 37 to 105 are compositionally biased toward basic and acidic residues; sequence NHERPGEREH…REPCREREQE (69 aa). Disordered stretches follow at residues 37 to 193, 346 to 367, and 382 to 405; these read NHER…RFQT, LGNE…SYQD, and LRKH…NLRS. Residues 140–149 show a composition bias toward low complexity; that stretch reads QGSSSSSRKQ. The segment covering 150–179 has biased composition (basic and acidic residues); it reads SGYERRQYHERREQRDEKEKEQDSRSDSRR. Residues 184–342 form the Cupin type-1 1 domain; the sequence is YHFSSERFQT…TFNTRYEEIQ (159 aa). Positions 401–563 constitute a Cupin type-1 2 domain; that stretch reads FNLRSNESIY…TFPGSAQDVE (163 aa). N406 and N513 each carry an N-linked (GlcNAc...) asparagine glycan. Residues 574–593 are disordered; it reads FANAQPQQKQQREKEGRRGR.

It belongs to the 7S seed storage protein family. As to quaternary structure, component of globulins complexes which accumulate in seeds.

Functionally, seed storage protein. Accumulates during seed development and is hydrolyzed after germination to provide a carbon and nitrogen source for the developing seedling. This Lupinus angustifolius (Narrow-leaved blue lupine) protein is Conglutin beta 7.